Here is a 237-residue protein sequence, read N- to C-terminus: Proteasome subunit alpha type-5-A (237 aa).

An N-acetylmethionine modification is found at Met1. Residues Lys43 and Lys66 each participate in a glycyl lysine isopeptide (Lys-Gly) (interchain with G-Cter in ubiquitin) cross-link.

The protein belongs to the peptidase T1A family. Component of the 20S core complex of the 26S proteasome. The 26S proteasome is composed of a core protease (CP), known as the 20S proteasome, capped at one or both ends by the 19S regulatory particle (RP/PA700). The 20S proteasome core is composed of 28 subunits that are arranged in four stacked rings, resulting in a barrel-shaped structure. The two end rings are each formed by seven alpha subunits, and the two central rings are each formed by seven beta subunits. The catalytic chamber with the active sites is on the inside of the barrel.

The protein localises to the cytoplasm. Its subcellular location is the nucleus. In terms of biological role, the proteasome is a multicatalytic proteinase complex which is characterized by its ability to cleave peptides with Arg, Phe, Tyr, Leu, and Glu adjacent to the leaving group at neutral or slightly basic pH. The proteasome has an ATP-dependent proteolytic activity. This Arabidopsis thaliana (Mouse-ear cress) protein is Proteasome subunit alpha type-5-A (PAE1).